A 124-amino-acid polypeptide reads, in one-letter code: Small ribosomal subunit protein uS12 (124 aa).

Asp89 carries the 3-methylthioaspartic acid modification.

This sequence belongs to the universal ribosomal protein uS12 family. As to quaternary structure, part of the 30S ribosomal subunit. Contacts proteins S8 and S17. May interact with IF1 in the 30S initiation complex.

In terms of biological role, with S4 and S5 plays an important role in translational accuracy. Its function is as follows. Interacts with and stabilizes bases of the 16S rRNA that are involved in tRNA selection in the A site and with the mRNA backbone. Located at the interface of the 30S and 50S subunits, it traverses the body of the 30S subunit contacting proteins on the other side and probably holding the rRNA structure together. The combined cluster of proteins S8, S12 and S17 appears to hold together the shoulder and platform of the 30S subunit. This chain is Small ribosomal subunit protein uS12, found in Leptospira biflexa serovar Patoc (strain Patoc 1 / Ames).